The following is an 844-amino-acid chain: Translation initiation factor IF-2 (844 aa).

Basic and acidic residues predominate over residues 1-11 (MTEDVKADVPK). Disordered regions lie at residues 1-35 (MTEDVKADVPKKLSIQRRTKTTVSGTTTSGKSKAV) and 79-248 (RLEA…KGAA). Low complexity predominate over residues 21 to 33 (TTVSGTTTSGKSK). Positions 79-161 (RLEAEKAATK…AAEEAKRYAE (83 aa)) are enriched in basic and acidic residues. The segment covering 162–175 (ADDSDNESSSEDYS) has biased composition (acidic residues). Positions 200-210 (RGKNKVAKAKK) are enriched in basic residues. The segment covering 211–237 (GGRDDENSKNSKNERESNRKNQKDAKF) has biased composition (basic and acidic residues). Positions 343-513 (TRAPVVTIMG…LLQSEVLELT (171 aa)) constitute a tr-type G domain. The G1 stretch occupies residues 352 to 359 (GHVDHGKT). Position 352–359 (352–359 (GHVDHGKT)) interacts with GTP. A G2 region spans residues 377 to 381 (GITQH). A G3 region spans residues 399–402 (DTPG). Residues 399 to 403 (DTPGH) and 453 to 456 (NKID) contribute to the GTP site. The interval 453-456 (NKID) is G4. The interval 489-491 (SAK) is G5.

The protein belongs to the TRAFAC class translation factor GTPase superfamily. Classic translation factor GTPase family. IF-2 subfamily.

It is found in the cytoplasm. Functionally, one of the essential components for the initiation of protein synthesis. Protects formylmethionyl-tRNA from spontaneous hydrolysis and promotes its binding to the 30S ribosomal subunits. Also involved in the hydrolysis of GTP during the formation of the 70S ribosomal complex. In Haemophilus influenzae (strain PittGG), this protein is Translation initiation factor IF-2.